The chain runs to 345 residues: Sesquiterpene synthase PILCRDRAFT_825684 (345 aa).

4 residues coordinate Mg(2+): aspartate 91, asparagine 226, serine 230, and glutamate 234. Positions 91-95 (DELTD) match the DDXXD motif motif. The (2E,6E)-farnesyl diphosphate site is built by arginine 316 and tyrosine 317.

This sequence belongs to the terpene synthase family. The cofactor is Mg(2+).

The enzyme catalyses (2E,6E)-farnesyl diphosphate = viridiflorene + diphosphate. Its function is as follows. Terpene cyclase that catalyzes the cyclization of farnesyl diphosphate (FPP) to various sesquiterpenes, including beta-elemene, viridiflorene and gamma-cadinene. Gamma-cadinene is the major product of PILCRDRAFT_825684. This chain is Sesquiterpene synthase PILCRDRAFT_825684, found in Piloderma croceum (strain F 1598).